The primary structure comprises 528 residues: Glutamyl-tRNA(Gln) amidotransferase subunit B, mitochondrial (528 aa).

It belongs to the GatB/GatE family. GatB subfamily. In terms of assembly, subunit of the heterotrimeric GatFAB amidotransferase (AdT) complex, composed of A, B and F subunits.

Its subcellular location is the mitochondrion. The enzyme catalyses L-glutamyl-tRNA(Gln) + L-glutamine + ATP + H2O = L-glutaminyl-tRNA(Gln) + L-glutamate + ADP + phosphate + H(+). Allows the formation of correctly charged Gln-tRNA(Gln) through the transamidation of misacylated Glu-tRNA(Gln) in the mitochondria. The reaction takes place in the presence of glutamine and ATP through an activated gamma-phospho-Glu-tRNA(Gln). The polypeptide is Glutamyl-tRNA(Gln) amidotransferase subunit B, mitochondrial (Clavispora lusitaniae (strain ATCC 42720) (Yeast)).